A 156-amino-acid chain; its full sequence is Small ribosomal subunit protein uS7c (156 aa).

Belongs to the universal ribosomal protein uS7 family. Part of the 30S ribosomal subunit.

Its subcellular location is the plastid. The protein resides in the chloroplast. Functionally, one of the primary rRNA binding proteins, it binds directly to 16S rRNA where it nucleates assembly of the head domain of the 30S subunit. This Chlorokybus atmophyticus (Soil alga) protein is Small ribosomal subunit protein uS7c (rps7).